We begin with the raw amino-acid sequence, 375 residues long: tRNA-specific 2-thiouridylase MnmA (375 aa).

ATP-binding positions include 12-19 and methionine 38; that span reads GMSGGVDS. Residues 98 to 100 form an interaction with target base in tRNA region; sequence NPD. Catalysis depends on cysteine 103, which acts as the Nucleophile. Residues cysteine 103 and cysteine 200 are joined by a disulfide bond. Glycine 127 is an ATP binding site. The tract at residues 150–152 is interaction with tRNA; the sequence is KDQ. The active-site Cysteine persulfide intermediate is cysteine 200. The interaction with tRNA stretch occupies residues 312–313; the sequence is RY.

This sequence belongs to the MnmA/TRMU family.

The protein resides in the cytoplasm. The enzyme catalyses S-sulfanyl-L-cysteinyl-[protein] + uridine(34) in tRNA + AH2 + ATP = 2-thiouridine(34) in tRNA + L-cysteinyl-[protein] + A + AMP + diphosphate + H(+). Its function is as follows. Catalyzes the 2-thiolation of uridine at the wobble position (U34) of tRNA, leading to the formation of s(2)U34. The chain is tRNA-specific 2-thiouridylase MnmA from Lactobacillus delbrueckii subsp. bulgaricus (strain ATCC 11842 / DSM 20081 / BCRC 10696 / JCM 1002 / NBRC 13953 / NCIMB 11778 / NCTC 12712 / WDCM 00102 / Lb 14).